Reading from the N-terminus, the 186-residue chain is MKVIIGLGNIGKEYEKTRHNAGFIAIDLLLEKYKYNSIKEEFNSLVYTSIINNQKVLFVKPLTFMNNSGLTVKQIINFYKIDLNDLIVIHDDKDLNISRIQFKKDGSSAGHNGIKSIINNLNTQDFYRLRIGINKPANQWKIVDWVLSKFSDDELNLLKESFNNKSEFINDFTNNKTFTYLMNKYN.

Tyrosine 14 serves as a coordination point for tRNA. Histidine 19 serves as the catalytic Proton acceptor. Residues phenylalanine 64, asparagine 66, and asparagine 112 each coordinate tRNA.

Belongs to the PTH family. In terms of assembly, monomer.

Its subcellular location is the cytoplasm. It carries out the reaction an N-acyl-L-alpha-aminoacyl-tRNA + H2O = an N-acyl-L-amino acid + a tRNA + H(+). Functionally, hydrolyzes ribosome-free peptidyl-tRNAs (with 1 or more amino acids incorporated), which drop off the ribosome during protein synthesis, or as a result of ribosome stalling. Its function is as follows. Catalyzes the release of premature peptidyl moieties from peptidyl-tRNA molecules trapped in stalled 50S ribosomal subunits, and thus maintains levels of free tRNAs and 50S ribosomes. The polypeptide is Peptidyl-tRNA hydrolase (Mycoplasma capricolum subsp. capricolum (strain California kid / ATCC 27343 / NCTC 10154)).